A 712-amino-acid chain; its full sequence is uncharacterized protein (712 aa).

3 disordered regions span residues M1 to N46, N107 to A264, and Q370 to Q389. Low complexity-rich tracts occupy residues I10–N46, N107–S143, and T161–N173. Residues I178–E187 are compositionally biased toward polar residues. Composition is skewed to low complexity over residues Q188–Q198 and P241–A264.

This is an uncharacterized protein from Dictyostelium discoideum (Social amoeba).